Consider the following 187-residue polypeptide: Putative adenylate kinase (187 aa).

The ATP site is built by G10, G12, K13, T14, and V15. The interval 30–53 (SLSQFVIENKLYTEYDELRQSYII) is NMP. An LID region spans residues 103-113 (GRGWADIKVAE). R104 is an ATP binding site.

The protein belongs to the adenylate kinase family. AK6 subfamily. As to quaternary structure, interacts with uS11. Not a structural component of 40S pre-ribosomes, but transiently interacts with them by binding to uS11.

It catalyses the reaction AMP + ATP = 2 ADP. The enzyme catalyses ATP + H2O = ADP + phosphate + H(+). Broad-specificity nucleoside monophosphate (NMP) kinase that catalyzes the reversible transfer of the terminal phosphate group between nucleoside triphosphates and monophosphates. Also has ATPase activity. Involved in the late maturation steps of the 30S ribosomal particles, specifically 16S rRNA maturation. While NMP activity is not required for ribosome maturation, ATPase activity is. Associates transiently with small ribosomal subunit protein uS11. ATP hydrolysis breaks the interaction with uS11. May temporarily remove uS11 from the ribosome to enable a conformational change of the ribosomal RNA that is needed for the final maturation step of the small ribosomal subunit. This Saccharolobus islandicus (strain M.16.4 / Kamchatka #3) (Sulfolobus islandicus) protein is Putative adenylate kinase.